Here is a 1024-residue protein sequence, read N- to C-terminus: Beta-galactosidase 2 (1024 aa).

Residues Asn-103 and Asp-202 each coordinate substrate. Position 202 (Asp-202) interacts with Na(+). Glu-417, His-419, and Glu-462 together coordinate Mg(2+). Substrate contacts are provided by residues Glu-462 and 538–541 (EYAH). Glu-462 functions as the Proton donor in the catalytic mechanism. Glu-538 functions as the Nucleophile in the catalytic mechanism. Asn-598 contributes to the Mg(2+) binding site. Phe-602 and Asn-605 together coordinate Na(+). Residues Asn-605 and Trp-1000 each contribute to the substrate site.

This sequence belongs to the glycosyl hydrolase 2 family. As to quaternary structure, homotetramer. Mg(2+) serves as cofactor. The cofactor is Na(+).

It carries out the reaction Hydrolysis of terminal non-reducing beta-D-galactose residues in beta-D-galactosides.. This is Beta-galactosidase 2 from Klebsiella pneumoniae subsp. pneumoniae (strain ATCC 700721 / MGH 78578).